The primary structure comprises 408 residues: uncharacterized protein (408 aa).

Disordered stretches follow at residues 218-265 and 367-408; these read EPTA…TSER and MESE…ETPN. The span at 369-379 shows a compositional bias: low complexity; that stretch reads SEVINSSSSTS. Residues 394-408 show a composition bias toward acidic residues; sequence IVEEVPETAENETPN.

This sequence to C.elegans C05E11.1.

This is an uncharacterized protein from Arabidopsis thaliana (Mouse-ear cress).